A 150-amino-acid chain; its full sequence is FAD synthase (150 aa).

ATP-binding positions include 11-12 (TF), 16-19 (HPGH), Asp96, and Tyr124.

Belongs to the archaeal FAD synthase family. Homodimer. The cofactor is a divalent metal cation.

The enzyme catalyses FMN + ATP + H(+) = FAD + diphosphate. Its pathway is cofactor biosynthesis; FAD biosynthesis; FAD from FMN: step 1/1. Catalyzes the transfer of the AMP portion of ATP to flavin mononucleotide (FMN) to produce flavin adenine dinucleotide (FAD) coenzyme. The protein is FAD synthase of Methanococcus maripaludis (strain C5 / ATCC BAA-1333).